The sequence spans 289 residues: E3 ubiquitin-protein ligase MARCHF8 (289 aa).

A disordered region spans residues 1–68 (MNMPLHQISA…SAPVSSFPRT (68 aa)). Positions 25–39 (KTKEKEREEQNEKTL) are enriched in basic and acidic residues. Over residues 50 to 64 (SKAGGSSVASAPVSS) the composition is skewed to low complexity. The RING-CH-type zinc-finger motif lies at 70–131 (VTPSNQDICR…ELCKYEFIME (62 aa)). Positions 78, 81, 95, 97, 105, 108, 121, and 124 each coordinate Zn(2+). A run of 2 helical transmembrane segments spans residues 155 to 175 (CSVTFHVIAITCVVWSLYVLI) and 195 to 215 (FWTKLVVVAIGFTGGLLFMYV).

In terms of assembly, interacts with CD86.

The protein resides in the golgi apparatus membrane. Its subcellular location is the endoplasmic reticulum membrane. It localises to the cytoplasmic vesicle membrane. It is found in the lysosome membrane. The protein localises to the early endosome membrane. The catalysed reaction is S-ubiquitinyl-[E2 ubiquitin-conjugating enzyme]-L-cysteine + [acceptor protein]-L-lysine = [E2 ubiquitin-conjugating enzyme]-L-cysteine + N(6)-ubiquitinyl-[acceptor protein]-L-lysine.. Its pathway is protein modification; protein ubiquitination. Its function is as follows. E3 ubiquitin-protein ligase that plays several important roles in innate immunity and adaptive immunity. Mediates ubiquitination of CD86 and MHC class II proteins, such as HLA-DR alpha and beta, and promotes their subsequent endocytosis and sorting to lysosomes via multivesicular bodies. Possesses a very broad antiviral activity by specifically inactivating different viral fusion proteins. Targets and ubiquitinates cytoplasmic lysine residues of viral envelope glycoproteins with single transmembrane domains leading to their lysosomal degradation. Mediates the regulation of constitutive ubiquitination and trafficking of the viral restriction factor BST2 within the endocytic pathway. Plays a role in maintenance of immune tolerance to self by promoting the turnover and proteasomal degradation of PD-L1/CD274 via ubiquitination. Catalyzes the 'Lys-63'-linked polyubiquitylation of cGAS thereby inhibiting its DNA binding ability and impairing its antiviral innate immunity. Negatively regulates IL7-mediated T-cell homeostasis by mediating 'Lys-27'-linked polyubiquitination of IL7R, leading to its lysosomal degradation. The protein is E3 ubiquitin-protein ligase MARCHF8 (MARCHF8) of Bos taurus (Bovine).